The sequence spans 749 residues: Soluble starch synthase 2-1, chloroplastic/amyloplastic (749 aa).

Residues 1 to 44 constitute a chloroplast transit peptide; that stretch reads MAAAAVSSLLAPSGSCYSPGCHSCWGPGPGGGRRLPSPRRRPIT. K272 provides a ligand contact to ADP-alpha-D-glucose.

It belongs to the glycosyltransferase 1 family. Bacterial/plant glycogen synthase subfamily. Expressed in endosperm, leaves, and weakly in roots.

The protein resides in the plastid. Its subcellular location is the amyloplast. It localises to the chloroplast. The catalysed reaction is [(1-&gt;4)-alpha-D-glucosyl](n) + ADP-alpha-D-glucose = [(1-&gt;4)-alpha-D-glucosyl](n+1) + ADP + H(+). It functions in the pathway glycan biosynthesis; starch biosynthesis. In terms of biological role, may be involved in starch synthesis in endosperm amyloplasts and contribute to the deposition of transient starch in chloroplasts of leaves. The protein is Soluble starch synthase 2-1, chloroplastic/amyloplastic (SSII-1) of Oryza sativa subsp. japonica (Rice).